We begin with the raw amino-acid sequence, 494 residues long: Splicing regulatory glutamine/lysine-rich protein 1 (494 aa).

One can recognise an RRM domain in the interval Arg-69 to Asn-145. 2 positions are modified to phosphoserine: Ser-174 and Ser-187. Residues Ile-176 to Val-494 are disordered. Basic and acidic residues predominate over residues Glu-183–Gly-192. Basic residues-rich tracts occupy residues Gly-193–Ser-230 and Ser-238–Asp-262. Residues Lys-263–Arg-340 are compositionally biased toward basic and acidic residues. Residue Thr-348 is modified to Phosphothreonine. Basic residues predominate over residues Arg-357–Ser-373. Basic and acidic residues-rich tracts occupy residues Arg-404–Asp-453 and Lys-463–Ala-474.

The protein belongs to the splicing factor SR family. In terms of assembly, interacts with SREK1IP1. Homodimer. Binds SFRS1, SFRS2, SFRS3 and SFRS6. Interacts with the spliceosome. As to expression, ubiquitous. Detected in liver, brain, lung, spleen, testis and pancreas.

It localises to the nucleus. In terms of biological role, participates in the regulation of alternative splicing by modulating the activity of other splice facors. Inhibits the splicing activity of SFRS1, SFRS2 and SFRS6. Augments the splicing activity of SFRS3. This Rattus norvegicus (Rat) protein is Splicing regulatory glutamine/lysine-rich protein 1 (Srek1).